An 868-amino-acid chain; its full sequence is Leucine--tRNA ligase (868 aa).

Positions 42 to 52 (PYPSGKLHMGH) match the 'HIGH' region motif. Positions 627–631 (KMSKS) match the 'KMSKS' region motif. Lys-630 contributes to the ATP binding site.

This sequence belongs to the class-I aminoacyl-tRNA synthetase family.

It localises to the cytoplasm. It carries out the reaction tRNA(Leu) + L-leucine + ATP = L-leucyl-tRNA(Leu) + AMP + diphosphate. The sequence is that of Leucine--tRNA ligase from Pseudomonas putida (strain ATCC 47054 / DSM 6125 / CFBP 8728 / NCIMB 11950 / KT2440).